We begin with the raw amino-acid sequence, 259 residues long: Phosphatidylglycerol--prolipoprotein diacylglyceryl transferase (259 aa).

Helical transmembrane passes span 9–29, 55–75, 92–112, and 117–137; these read IIFSIGPLAISWYSLSYVIGI, FITYAVIGIIVGGRLGFVLLY, EGGMSFHGGALGGIITAYLFC, and INFLSLTDIIAPVVPIGLFLG. Residue Arg-138 coordinates a 1,2-diacyl-sn-glycero-3-phospho-(1'-sn-glycerol). 3 consecutive transmembrane segments (helical) span residues 172–192, 201–221, and 228–248; these read QLYEAFFEGLVLFSILAYTTF, GLNSGIFFTFYGLFRITIEIF, and IGFILDSLTMGQILSVPMLLL.

This sequence belongs to the Lgt family.

It localises to the cell inner membrane. It catalyses the reaction L-cysteinyl-[prolipoprotein] + a 1,2-diacyl-sn-glycero-3-phospho-(1'-sn-glycerol) = an S-1,2-diacyl-sn-glyceryl-L-cysteinyl-[prolipoprotein] + sn-glycerol 1-phosphate + H(+). It participates in protein modification; lipoprotein biosynthesis (diacylglyceryl transfer). Functionally, catalyzes the transfer of the diacylglyceryl group from phosphatidylglycerol to the sulfhydryl group of the N-terminal cysteine of a prolipoprotein, the first step in the formation of mature lipoproteins. In Rickettsia africae (strain ESF-5), this protein is Phosphatidylglycerol--prolipoprotein diacylglyceryl transferase.